Consider the following 291-residue polypeptide: Porphobilinogen deaminase (291 aa).

Position 237 is an S-(dipyrrolylmethanemethyl)cysteine (cysteine 237).

It belongs to the HMBS family. Monomer. It depends on dipyrromethane as a cofactor.

The enzyme catalyses 4 porphobilinogen + H2O = hydroxymethylbilane + 4 NH4(+). The protein operates within porphyrin-containing compound metabolism; protoporphyrin-IX biosynthesis; coproporphyrinogen-III from 5-aminolevulinate: step 2/4. In terms of biological role, tetrapolymerization of the monopyrrole PBG into the hydroxymethylbilane pre-uroporphyrinogen in several discrete steps. This chain is Porphobilinogen deaminase, found in Clostridium perfringens (strain 13 / Type A).